A 116-amino-acid polypeptide reads, in one-letter code: Large ribosomal subunit protein uL24 (116 aa).

This sequence belongs to the universal ribosomal protein uL24 family. Part of the 50S ribosomal subunit.

Functionally, one of two assembly initiator proteins, it binds directly to the 5'-end of the 23S rRNA, where it nucleates assembly of the 50S subunit. One of the proteins that surrounds the polypeptide exit tunnel on the outside of the subunit. This is Large ribosomal subunit protein uL24 from Protochlamydia amoebophila (strain UWE25).